The primary structure comprises 285 residues: Acetyl-coenzyme A carboxylase carboxyl transferase subunit beta (285 aa).

Residues 29–285 (IMTKCPKCKK…ILKIHQEVTK (257 aa)) enclose the CoA carboxyltransferase N-terminal domain. Zn(2+) is bound by residues C33, C36, C52, and C55. The segment at 33–55 (CPKCKKIMYTKELAENLNVCFNC) adopts a C4-type zinc-finger fold.

It belongs to the AccD/PCCB family. As to quaternary structure, acetyl-CoA carboxylase is a heterohexamer composed of biotin carboxyl carrier protein (AccB), biotin carboxylase (AccC) and two subunits each of ACCase subunit alpha (AccA) and ACCase subunit beta (AccD). Zn(2+) is required as a cofactor.

The protein localises to the cytoplasm. The enzyme catalyses N(6)-carboxybiotinyl-L-lysyl-[protein] + acetyl-CoA = N(6)-biotinyl-L-lysyl-[protein] + malonyl-CoA. Its pathway is lipid metabolism; malonyl-CoA biosynthesis; malonyl-CoA from acetyl-CoA: step 1/1. Its function is as follows. Component of the acetyl coenzyme A carboxylase (ACC) complex. Biotin carboxylase (BC) catalyzes the carboxylation of biotin on its carrier protein (BCCP) and then the CO(2) group is transferred by the transcarboxylase to acetyl-CoA to form malonyl-CoA. The sequence is that of Acetyl-coenzyme A carboxylase carboxyl transferase subunit beta from Staphylococcus aureus (strain MSSA476).